Consider the following 485-residue polypeptide: Glutamate--tRNA ligase (485 aa).

Residues 11 to 21 (PSPTGYMHVGN) carry the 'HIGH' region motif. Cysteine 108, cysteine 110, cysteine 135, and aspartate 137 together coordinate Zn(2+). A 'KMSKS' region motif is present at residues 252 to 256 (KLSKR). ATP is bound at residue lysine 255.

It belongs to the class-I aminoacyl-tRNA synthetase family. Glutamate--tRNA ligase type 1 subfamily. In terms of assembly, monomer. Zn(2+) serves as cofactor.

It localises to the cytoplasm. It catalyses the reaction tRNA(Glu) + L-glutamate + ATP = L-glutamyl-tRNA(Glu) + AMP + diphosphate. Its function is as follows. Catalyzes the attachment of glutamate to tRNA(Glu) in a two-step reaction: glutamate is first activated by ATP to form Glu-AMP and then transferred to the acceptor end of tRNA(Glu). This Clostridium botulinum (strain ATCC 19397 / Type A) protein is Glutamate--tRNA ligase.